The sequence spans 807 residues: Potassium transporter 9 (807 aa).

The Cytoplasmic portion of the chain corresponds to 1–59 (MAERVEASSVPEGENTIEEREVGAMWELEQKLDQPMDEEANKLNNMYREKGLSMLMLLR). A helical membrane pass occupies residues 60-80 (LSFQSLGIVYGDLGTSPLYVF). Topologically, residues 81-96 (YNTFPDGIDDSEDVIG) are extracellular. The chain crosses the membrane as a helical span at residues 97–117 (ALSLIIYSLLLIPLIKYVFIV). The Cytoplasmic segment spans residues 118–185 (CKANDNGQGG…EGKEWRKRAL (68 aa)). Residues 186–206 (LVVVLLGTCMMIGDGILTPAI) traverse the membrane as a helical segment. Topologically, residues 207 to 225 (SVLSATGGIKVNNPKMSGD) are extracellular. Residues 226 to 246 (IVVLVAIVILIGLFSMQHYGT) form a helical membrane-spanning segment. Residues 247–248 (DK) lie on the Cytoplasmic side of the membrane. The helical transmembrane segment at 249–269 (VGWLFAPIVLIWFLFIGATGM) threads the bilayer. The Extracellular segment spans residues 270–299 (YNICKYDTSVLKAFSPTYIYLYFKRRGRDG). Residues 300 to 320 (WISLGGILLSITGTEALYADI) form a helical membrane-spanning segment. The Cytoplasmic portion of the chain corresponds to 321–322 (AY). Residues 323 to 343 (FPLLAIQLAFTFFVFPCLLLA) traverse the membrane as a helical segment. The Extracellular portion of the chain corresponds to 344 to 369 (YCGQAAYLVIHKEHYQDAFYASIPDS). Residues 370–390 (VYWPMFIVATGAAIVGSQATI) traverse the membrane as a helical segment. Residues 391–417 (SGTYSIVKQAVAHGCFPRVKIVHTSKK) are Cytoplasmic-facing. Residues 418 to 438 (FLGQIYCPDINWILMLGCIAV) traverse the membrane as a helical segment. At 439–454 (TASFKKQSQIGNAYGT) the chain is on the extracellular side. A helical membrane pass occupies residues 455 to 475 (AVVLVMLVTTLLMVLIMLLVW). Over 476-481 (HCHWIL) the chain is Cytoplasmic. A helical transmembrane segment spans residues 482–502 (VLIFTFLSFFVELSYFSAVIF). Over 503–507 (KIDEG) the chain is Extracellular. Residues 508–528 (GWVPLIIAAISLLVMSVWHYA) traverse the membrane as a helical segment. The Cytoplasmic segment spans residues 529–807 (TVKKYEFEMH…LLNVGQVFYV (279 aa)).

The protein belongs to the HAK/KUP transporter (TC 2.A.72.3) family.

The protein resides in the cell membrane. Its function is as follows. Putative potassium transporter. This is Potassium transporter 9 (POT9) from Arabidopsis thaliana (Mouse-ear cress).